Here is a 581-residue protein sequence, read N- to C-terminus: Bestrophin-1 (581 aa).

Over 1–31 the chain is Cytoplasmic; sequence MTVTYSSQVANARLGSFSRLLLCWRGSIYKL. Ala10 is a Ca(2+) binding site. A helical transmembrane segment spans residues 32–51; the sequence is LYGEFLIFLLCYYIIRFIYR. At 52–60 the chain is on the extracellular side; that stretch reads MALTDEQQV. The helical transmembrane segment at 61-82 threads the bilayer; sequence IFEKLTLYCDSYIQLIPISFVL. Residues 83–237 are Cytoplasmic-facing; that stretch reads GFYVTLVVTR…DWISVPLVYT (155 aa). A helical transmembrane segment spans residues 238–255; the sequence is QVVTVAVYSFFLACLVGR. Over 256-274 the chain is Extracellular; it reads QFLNPAKAYPGHEMDLVVP. Residues 275-288 traverse the membrane as a helical segment; sequence LFTFLQFFFYAGWL. Residues 289-581 lie on the Cytoplasmic side of the membrane; it reads KVAEQLINPF…ALENRDEAHS (293 aa). Residues Gln293, Asn296, Asp301, and Asp304 each coordinate Ca(2+). Positions 416–440 are disordered; it reads EGHFHEGHPKNLRGARLDSSDQEDS.

The protein belongs to the anion channel-forming bestrophin (TC 1.A.46) family. Calcium-sensitive chloride channel subfamily. As to quaternary structure, interacts with YWHAG; this interaction promotes the ligand-gated L-glutamate channel activity leading to the positive regulation of NMDA glutamate receptor activity through the L-glutamate secretion. Post-translationally, phosphorylated (in vitro). Dephosphorylated (in vitro) by PP2A.

The protein resides in the cell membrane. It is found in the basolateral cell membrane. It carries out the reaction chloride(in) = chloride(out). The catalysed reaction is hydrogencarbonate(in) = hydrogencarbonate(out). It catalyses the reaction 4-aminobutanoate(in) = 4-aminobutanoate(out). The enzyme catalyses L-glutamate(out) = L-glutamate(in). Functionally, ligand-gated anion channel that allows the movement of anions across cell membranes when activated by calcium (Ca2+). Allows the movement of chloride and hydrogencarbonate. Found in a partially open conformation leading to significantly smaller chloride movement. Upon F2R/PAR-1 activation, the sequestered calcium is released into the cytosol of astrocytes, leading to the (Ca2+)-dependent release of L-glutamate into the synaptic cleft that targets the neuronal postsynaptic GRIN2A/NMDAR receptor resulting in the synaptic plasticity regulation. Upon activation of the norepinephrine-alpha-1 adrenergic receptor signaling pathway, transports as well D-serine than L-glutamate in a (Ca2+)-dependent manner, leading to activation of adjacent NMDAR receptors and therefore regulates the heterosynaptic long-term depression and metaplasticity during initial memory acquisition. Releases the 4-aminobutanoate neurotransmitter in a (Ca2+)-dependent manner, and participates in its tonic release from cerebellar glial cells. The polypeptide is Bestrophin-1 (Sus scrofa (Pig)).